A 180-amino-acid chain; its full sequence is NEDD8-conjugating enzyme ubc-12 (180 aa).

The region spanning 24 to 180 is the UBC core domain; the sequence is VRDKLLAQEL…RVREYISRYC (157 aa). The active-site Glycyl thioester intermediate is C112.

Belongs to the ubiquitin-conjugating enzyme family. UBC12 subfamily.

It is found in the cytoplasm. The enzyme catalyses [E1 NEDD8-activating enzyme]-S-[NEDD8 protein]-yl-L-cysteine + [E2 NEDD8-conjugating enzyme]-L-cysteine = [E1 NEDD8-activating enzyme]-L-cysteine + [E2 NEDD8-conjugating enzyme]-S-[NEDD8-protein]-yl-L-cysteine.. It participates in protein modification; protein neddylation. Its function is as follows. Accepts the ubiquitin-like protein NEDD8 from the uba-3-ula-1 E1 complex and catalyzes its covalent attachment to other proteins. Plays a role in male tail tip morphogenesis. The chain is NEDD8-conjugating enzyme ubc-12 from Caenorhabditis elegans.